The chain runs to 423 residues: MASALEQFVNNVRQLSAQGQMTQLCELINKSGELLAKNLSHLDTVLGALDIQEHSLGVLAVLFVKFSMPNIPDFETLFSQVQLFISTCNGEHIRYATDTFAGLCHQLTNALVERKQPLRGISILKQAIDKMQMNTNQLTSVHADLCQLCLLAKCFKPAVPFLELDMMDICKENGAYDAKHFLCYYYYGGMIYTGLKNFERALYFFEQAITTPAMAVSHIMLEAYKKYILVSLILHGKVQQLPKYTSQIVGRFIKPLSNAYHELAQIYATNNPAELRALVNKHSETFTRDNNTGLVKQCLSSLYKKNIQRLTKTFLTLSLQDMASRVQLSGPQEAEKYVLHMIEDGEIYASINQKDGMVCFHDNPEKYNNPAMLHKIDQEMLKCIELDEKLKSMDQEITVNPQFVQKSMGTQEDDVGSKTSSYS.

Residues 197–365 form the PCI domain; that stretch reads NFERALYFFE…GMVCFHDNPE (169 aa). The disordered stretch occupies residues 402 to 423; sequence QFVQKSMGTQEDDVGSKTSSYS.

This sequence belongs to the CSN3 family. As to quaternary structure, component of the CSN complex, probably composed of cops1, cops2, cops3, cops4, cops5, cops6, cops7, cops8 and cops9.

The protein localises to the cytoplasm. The protein resides in the nucleus. Functionally, component of the COP9 signalosome complex (CSN), a complex involved in various cellular and developmental processes. The CSN complex is an essential regulator of the ubiquitin (Ubl) conjugation pathway by mediating the deneddylation of the cullin subunits of E3 ligase complexes, leading to modify the Ubl ligase activity. The sequence is that of COP9 signalosome complex subunit 3 (cops3) from Danio rerio (Zebrafish).